The sequence spans 342 residues: Fructose-1,6-bisphosphatase class 1 (342 aa).

Mg(2+) contacts are provided by glutamate 91, aspartate 113, leucine 115, and aspartate 116. Substrate contacts are provided by residues 116 to 119, asparagine 211, and lysine 277; that span reads DGSS. Glutamate 283 is a binding site for Mg(2+).

The protein belongs to the FBPase class 1 family. In terms of assembly, homotetramer. Mg(2+) is required as a cofactor.

It is found in the cytoplasm. The catalysed reaction is beta-D-fructose 1,6-bisphosphate + H2O = beta-D-fructose 6-phosphate + phosphate. The protein operates within carbohydrate biosynthesis; gluconeogenesis. The protein is Fructose-1,6-bisphosphatase class 1 of Bordetella petrii (strain ATCC BAA-461 / DSM 12804 / CCUG 43448).